A 914-amino-acid chain; its full sequence is UPF0182 protein PTH_1387 (914 aa).

7 helical membrane-spanning segments follow: residues 7 to 27 (FAAYVLAGFGLIFLALTIAGA), 48 to 68 (IIISDLGLRLAVGLTFFVLLF), 109 to 129 (LLLLAFIALSALMAFLFNFTV), 173 to 193 (INWVILVSAFWVLAAYFVVYF), 209 to 229 (YHFSFLAAIFFGLKAAGYQLE), 252 to 272 (TLLAYKVLTYIALLCALAILI), and 281 to 301 (LVIYSIGVLLIASVLLGGIYP).

The protein belongs to the UPF0182 family.

It is found in the cell membrane. The polypeptide is UPF0182 protein PTH_1387 (Pelotomaculum thermopropionicum (strain DSM 13744 / JCM 10971 / SI)).